We begin with the raw amino-acid sequence, 248 residues long: Anamorsin homolog (248 aa).

An N-terminal SAM-like domain region spans residues 4-129 (FKGLQKSLYI…ETGSSARLSF (126 aa)). The tract at residues 130-161 (AKKNANAANVWKISGDDEELIDEEELLDEEDK) is linker. Positions 172, 181, 184, and 186 each coordinate [2Fe-2S] cluster. The interval 172–186 (CSTTGKRKACKNCSC) is fe-S binding site A. Residues cysteine 209, cysteine 212, cysteine 220, and cysteine 223 each coordinate [4Fe-4S] cluster. Short sequence motifs (cx2C motif) lie at residues 209–212 (CGNC) and 220–223 (CSTC). The tract at residues 209–223 (CGNCYLGDAFRCSTC) is fe-S binding site B.

It belongs to the anamorsin family. Monomer. The cofactor is [2Fe-2S] cluster. [4Fe-4S] cluster serves as cofactor.

The protein localises to the cytoplasm. It is found in the mitochondrion intermembrane space. Its function is as follows. Component of the cytosolic iron-sulfur (Fe-S) protein assembly (CIA) machinery. Required for the maturation of extramitochondrial Fe-S proteins. Part of an electron transfer chain functioning in an early step of cytosolic Fe-S biogenesis, facilitating the de novo assembly of a [4Fe-4S] cluster on the cytosolic Fe-S scaffold complex. Electrons are transferred from NADPH via a FAD- and FMN-containing diflavin oxidoreductase. Together with the diflavin oxidoreductase, also required for the assembly of the diferric tyrosyl radical cofactor of ribonucleotide reductase (RNR), probably by providing electrons for reduction during radical cofactor maturation in the catalytic small subunit. The polypeptide is Anamorsin homolog (Drosophila sechellia (Fruit fly)).